We begin with the raw amino-acid sequence, 291 residues long: Exosome complex exonuclease RRP42 (291 aa).

Ala-2 bears the N-acetylalanine mark. Lys-116 bears the N6-acetyllysine mark.

This sequence belongs to the RNase PH family. As to quaternary structure, component of the RNA exosome core complex (Exo-9), composed of EXOSC1, EXOSC2, EXOSC3, EXOSC4, EXOSC5, EXOSC6, EXOSC7, EXOSC8 and EXOSC9; within the complex interacts with EXOSC2 and EXOSC4. The catalytically inactive RNA exosome core complex (Exo-9) associates with the catalytic subunit EXOSC10/RRP6. Exo-9 may associate with DIS3 to form the nucleolar exosome complex, or DIS3L to form the cytoplasmic exosome complex. Exo-9 is formed by a hexameric base ring consisting of the heterodimers EXOSC4-EXOSC9, EXOSC5-EXOSC8 and EXOSC6-EXOSC7, and a cap ring consisting of EXOSC1, EXOSC2 and EXOSC3. The RNA exosome complex associates with cofactors C1D/RRP47, MPHOSPH6/MPP6 and MTREX/MTR4. Interacts with ZC3HAV1. Interacts with DIS3; the interaction is direct.

Its subcellular location is the nucleus. It localises to the nucleolus. The protein resides in the cytoplasm. Its function is as follows. Non-catalytic component of the RNA exosome complex which has 3'-&gt;5' exoribonuclease activity and participates in a multitude of cellular RNA processing and degradation events. In the nucleus, the RNA exosome complex is involved in proper maturation of stable RNA species such as rRNA, snRNA and snoRNA, in the elimination of RNA processing by-products and non-coding 'pervasive' transcripts, such as antisense RNA species and promoter-upstream transcripts (PROMPTs), and of mRNAs with processing defects, thereby limiting or excluding their export to the cytoplasm. The RNA exosome may be involved in Ig class switch recombination (CSR) and/or Ig variable region somatic hypermutation (SHM) by targeting AICDA deamination activity to transcribed dsDNA substrates. In the cytoplasm, the RNA exosome complex is involved in general mRNA turnover and specifically degrades inherently unstable mRNAs containing AU-rich elements (AREs) within their 3' untranslated regions, and in RNA surveillance pathways, preventing translation of aberrant mRNAs. It seems to be involved in degradation of histone mRNA. The catalytic inactive RNA exosome core complex of 9 subunits (Exo-9) is proposed to play a pivotal role in the binding and presentation of RNA for ribonucleolysis, and to serve as a scaffold for the association with catalytic subunits and accessory proteins or complexes. The sequence is that of Exosome complex exonuclease RRP42 (Exosc7) from Mus musculus (Mouse).